Reading from the N-terminus, the 151-residue chain is D-aminoacyl-tRNA deacylase (151 aa).

Residues 137–138 carry the Gly-cisPro motif, important for rejection of L-amino acids motif; that stretch reads GP.

This sequence belongs to the DTD family. In terms of assembly, homodimer.

Its subcellular location is the cytoplasm. The catalysed reaction is glycyl-tRNA(Ala) + H2O = tRNA(Ala) + glycine + H(+). It catalyses the reaction a D-aminoacyl-tRNA + H2O = a tRNA + a D-alpha-amino acid + H(+). An aminoacyl-tRNA editing enzyme that deacylates mischarged D-aminoacyl-tRNAs. Also deacylates mischarged glycyl-tRNA(Ala), protecting cells against glycine mischarging by AlaRS. Acts via tRNA-based rather than protein-based catalysis; rejects L-amino acids rather than detecting D-amino acids in the active site. By recycling D-aminoacyl-tRNA to D-amino acids and free tRNA molecules, this enzyme counteracts the toxicity associated with the formation of D-aminoacyl-tRNA entities in vivo and helps enforce protein L-homochirality. This is D-aminoacyl-tRNA deacylase from Geobacter metallireducens (strain ATCC 53774 / DSM 7210 / GS-15).